The following is a 123-amino-acid chain: Large ribosomal subunit protein uL24 (123 aa).

Belongs to the universal ribosomal protein uL24 family. In terms of assembly, part of the 50S ribosomal subunit.

Its function is as follows. One of two assembly initiator proteins, it binds directly to the 5'-end of the 23S rRNA, where it nucleates assembly of the 50S subunit. In terms of biological role, located at the polypeptide exit tunnel on the outside of the subunit. The polypeptide is Large ribosomal subunit protein uL24 (Methanocella arvoryzae (strain DSM 22066 / NBRC 105507 / MRE50)).